We begin with the raw amino-acid sequence, 704 residues long: Elongation factor G (704 aa).

One can recognise a tr-type G domain in the interval E8 to N290. Residues A17–T24, D88–H92, and N142–D145 contribute to the GTP site.

This sequence belongs to the TRAFAC class translation factor GTPase superfamily. Classic translation factor GTPase family. EF-G/EF-2 subfamily.

The protein localises to the cytoplasm. Catalyzes the GTP-dependent ribosomal translocation step during translation elongation. During this step, the ribosome changes from the pre-translocational (PRE) to the post-translocational (POST) state as the newly formed A-site-bound peptidyl-tRNA and P-site-bound deacylated tRNA move to the P and E sites, respectively. Catalyzes the coordinated movement of the two tRNA molecules, the mRNA and conformational changes in the ribosome. The chain is Elongation factor G from Francisella tularensis subsp. tularensis (strain FSC 198).